We begin with the raw amino-acid sequence, 712 residues long: Cyclolysin secretion/processing ATP-binding protein CyaB (712 aa).

The Peptidase C39 domain maps to 7-128 (QCASVPDSGL…ALWAGELLLC (122 aa)). The ABC transmembrane type-1 domain maps to 157-439 (IGEVLLISLV…LAQLWNDFQQ (283 aa)). The next 6 membrane-spanning stretches (helical) occupy residues 160-180 (VLLI…FFQV), 194-214 (LNVI…LTGI), 272-292 (AVTV…MFFY), 298-318 (LVVL…TPVL), 367-387 (VAAG…VTLI), and 390-410 (LVAL…RMTV). One can recognise an ABC transporter domain in the interval 471–706 (IELDRVSFRY…GGLYARLQAL (236 aa)). 505–512 (GRSGSGKS) is an ATP binding site.

It belongs to the ABC transporter superfamily. Cyclolysin exporter (TC 3.A.1.109.2) family.

The protein localises to the cell membrane. Functionally, involved in the export of calmodulin-sensitive adenylate cyclase-hemolysin (cyclolysin). The polypeptide is Cyclolysin secretion/processing ATP-binding protein CyaB (cyaB) (Bordetella pertussis (strain ATCC 9797 / DSM 5571 / CCUG 30873 / LMG 14455 / NCTC 10739 / 18323)).